We begin with the raw amino-acid sequence, 445 residues long: Histamine H3 receptor (445 aa).

Residues 1–40 (MERAPPDGLMNASGALAGEAAAAAGGARTFSAAWTAVLAA) lie on the Extracellular side of the membrane. Asparagine 11 carries N-linked (GlcNAc...) asparagine glycosylation. Residues 41-61 (LMALLIVATVLGNALVMLAFV) form a helical membrane-spanning segment. The Cytoplasmic portion of the chain corresponds to 62-71 (ADSSLRTQNN). Residues 72 to 92 (FFLLNLAISDFLVGVFCIPLY) traverse the membrane as a helical segment. The Extracellular portion of the chain corresponds to 93-109 (VPYVLTGRWTFGRGLCK). A disulfide bridge connects residues cysteine 108 and cysteine 189. Residues 110–130 (LWLVVDYLLCTSSVFNIVLIS) form a helical membrane-spanning segment. At 131–157 (YDRFLSVTRAVSYRAQQGDTRRAVRKM) the chain is on the cytoplasmic side. A helical transmembrane segment spans residues 158–178 (VLVWVLAFLLYGPAILSWEYL). Topologically, residues 179 to 197 (SGGSSIPEGHCYAEFFYNW) are extracellular. A helical transmembrane segment spans residues 198–218 (YFLITASTLEFFTPFLSVTFF). The Cytoplasmic segment spans residues 219-359 (NLSIYLNIQR…LSRDKKVAKS (141 aa)). Disordered regions lie at residues 236-264 (GGAREAGPDPLPEAQSSPPQPPPGCWGCW) and 288-336 (AGEA…LEKR). Low complexity predominate over residues 299-312 (AAASPTSSSGSSSR). The helical transmembrane segment at 360–380 (LAIIVSIFGLCWAPYTLLMII) threads the bilayer. At 381 to 398 (RAACHGHCVPDYWYETSF) the chain is on the extracellular side. The chain crosses the membrane as a helical span at residues 399–419 (WLLWANSAVNPVLYPLCHYSF). Topologically, residues 420 to 445 (RRAFTKLLCPQKLKVQPHSSLEHCWK) are cytoplasmic. A Phosphoserine modification is found at serine 439.

It belongs to the G-protein coupled receptor 1 family. In terms of tissue distribution, expressed widely and abundantly throughout the brain. Highly expressed in discrete neuronal populations such as pyramidal cells in cerebral cortex or cerebellar Purkinje cells.

Its subcellular location is the cell membrane. Its function is as follows. The H3 subclass of histamine receptors could mediate the histamine signals in CNS and peripheral nervous system. Signals through the inhibition of adenylate cyclase and displays high constitutive activity (spontaneous activity in the absence of agonist). This Cavia porcellus (Guinea pig) protein is Histamine H3 receptor (HRH3).